The chain runs to 230 residues: MREQRPIIALDFPDFDTLKDFLNQFPKDEALYVKIGMELYYAVGPEIVRYVKSLGHSVFLDLKLHDIPNTVKSTMKVLAKMGIDMTTVQAAGGVEMLEAAREGLGDDPILIAVTQLTSTSEEQMREDQNIQTTLTESVLHYAKRTALAKLDGVVCSAHEVEAIKSVTSKDFLCLTPGIRPKGTDIGDQKRVMTPQEAKAIGSDFIVVGRPITQAPDPLAAYHAIKADWNA.

Substrate is bound by residues Asp-11, Lys-34, 61–70 (DLKLHDIPNT), Thr-117, Arg-179, Gln-188, Gly-208, and Arg-209. Lys-63 acts as the Proton donor in catalysis.

This sequence belongs to the OMP decarboxylase family. Type 1 subfamily. In terms of assembly, homodimer.

It catalyses the reaction orotidine 5'-phosphate + H(+) = UMP + CO2. The protein operates within pyrimidine metabolism; UMP biosynthesis via de novo pathway; UMP from orotate: step 2/2. Catalyzes the decarboxylation of orotidine 5'-monophosphate (OMP) to uridine 5'-monophosphate (UMP). This Streptococcus uberis (strain ATCC BAA-854 / 0140J) protein is Orotidine 5'-phosphate decarboxylase.